We begin with the raw amino-acid sequence, 285 residues long: Energy-coupling factor transporter ATP-binding protein EcfA2 (285 aa).

Residues 3–245 (INFEQVNFSY…DLVWFKTVAL (243 aa)) form the ABC transporter domain. 40 to 47 (GQTGSGKS) lines the ATP pocket. The active-site Proton acceptor is the glutamate 171.

The protein belongs to the ABC transporter superfamily. Energy-coupling factor EcfA family. As to quaternary structure, forms a stable energy-coupling factor (ECF) transporter complex probably composed of 2 membrane-embedded substrate-binding proteins (S component), 2 ATP-binding proteins (A component) and 2 transmembrane proteins (T component). This complex interacts with a number of substrate-specific components, including FolT, PanT and RibU for 5-formyltetrahydrofolate, pantothenate and riboflavin respectively.

It localises to the cell membrane. Its function is as follows. ATP-binding (A) component of a common energy-coupling factor (ECF) ABC-transporter complex. Unlike classic ABC transporters this ECF transporter provides the energy necessary to transport a number of different substrates including 5-formyltetrahydrofolate, pantothenate and riboflavin. Expression of the complex plus FolT in E.coli allows 5-formyltetrahydrofolate uptake; 5-formyltetrahydrofolate is not taken up in the absence of FolT or the EcfA1A2T complex. The chain is Energy-coupling factor transporter ATP-binding protein EcfA2 from Leuconostoc mesenteroides subsp. mesenteroides (strain ATCC 8293 / DSM 20343 / BCRC 11652 / CCM 1803 / JCM 6124 / NCDO 523 / NBRC 100496 / NCIMB 8023 / NCTC 12954 / NRRL B-1118 / 37Y).